Here is a 97-residue protein sequence, read N- to C-terminus: Plasmid stability protein StbC (97 aa).

Functionally, involved in plasmid stability. The polypeptide is Plasmid stability protein StbC (stbC) (Pseudomonas syringae pv. tomato (strain ATCC BAA-871 / DC3000)).